Reading from the N-terminus, the 546-residue chain is Glucose-6-phosphate isomerase (546 aa).

Residue glutamate 353 is the Proton donor of the active site. Catalysis depends on residues histidine 384 and lysine 512.

The protein belongs to the GPI family.

The protein resides in the cytoplasm. The catalysed reaction is alpha-D-glucose 6-phosphate = beta-D-fructose 6-phosphate. The protein operates within carbohydrate biosynthesis; gluconeogenesis. Its pathway is carbohydrate degradation; glycolysis; D-glyceraldehyde 3-phosphate and glycerone phosphate from D-glucose: step 2/4. Its function is as follows. Catalyzes the reversible isomerization of glucose-6-phosphate to fructose-6-phosphate. This is Glucose-6-phosphate isomerase from Actinobacillus pleuropneumoniae serotype 5b (strain L20).